The sequence spans 303 residues: MRHFLNINAIELDDVVDLVHRALAIKAGRSVIQSNLTVTNLFFENSTRTHSSFQMAENRLGYQQIDIDPQQSSMSKGESLTDTLKTLKAIGVDVAVIRHTVNNWYDQVLTATGHEIPHLINAGDGSGQHPSQSLLDLVTIYEQFNHFAGLNIRIVGDLAHSRVARSNAEILHHLGANMTFSGPKDWQPNDFGKFGQFVAIDDDWENLDVVIFLRVQHERITQTENQNFSTKQYHEQFGLNRVRYERLKAAAIIMHPAPVNRDVEIADELVEAPKSRIFEQMNNGVYARMAILEYTTEATHATH.

Carbamoyl phosphate contacts are provided by Arg48 and Thr49. An L-aspartate-binding site is contributed by Lys76. Arg98, His129, and Gln132 together coordinate carbamoyl phosphate. The L-aspartate site is built by Arg162 and Arg214. Carbamoyl phosphate is bound by residues Ala257 and Pro258.

It belongs to the aspartate/ornithine carbamoyltransferase superfamily. ATCase family. Heterododecamer (2C3:3R2) of six catalytic PyrB chains organized as two trimers (C3), and six regulatory PyrI chains organized as three dimers (R2).

It carries out the reaction carbamoyl phosphate + L-aspartate = N-carbamoyl-L-aspartate + phosphate + H(+). It participates in pyrimidine metabolism; UMP biosynthesis via de novo pathway; (S)-dihydroorotate from bicarbonate: step 2/3. Functionally, catalyzes the condensation of carbamoyl phosphate and aspartate to form carbamoyl aspartate and inorganic phosphate, the committed step in the de novo pyrimidine nucleotide biosynthesis pathway. The chain is Aspartate carbamoyltransferase catalytic subunit from Leuconostoc citreum (strain KM20).